Consider the following 328-residue polypeptide: uncharacterized protein (328 aa).

Coiled-coil stretches lie at residues 67-190 (FKEQ…VLEE) and 223-251 (MAQR…DNMM).

This is an uncharacterized protein from Mus musculus (Mouse).